Reading from the N-terminus, the 570-residue chain is Proline--tRNA ligase (570 aa).

It belongs to the class-II aminoacyl-tRNA synthetase family. ProS type 1 subfamily. In terms of assembly, homodimer.

It is found in the cytoplasm. It catalyses the reaction tRNA(Pro) + L-proline + ATP = L-prolyl-tRNA(Pro) + AMP + diphosphate. Functionally, catalyzes the attachment of proline to tRNA(Pro) in a two-step reaction: proline is first activated by ATP to form Pro-AMP and then transferred to the acceptor end of tRNA(Pro). As ProRS can inadvertently accommodate and process non-cognate amino acids such as alanine and cysteine, to avoid such errors it has two additional distinct editing activities against alanine. One activity is designated as 'pretransfer' editing and involves the tRNA(Pro)-independent hydrolysis of activated Ala-AMP. The other activity is designated 'posttransfer' editing and involves deacylation of mischarged Ala-tRNA(Pro). The misacylated Cys-tRNA(Pro) is not edited by ProRS. In Clostridium perfringens (strain SM101 / Type A), this protein is Proline--tRNA ligase.